Here is a 102-residue protein sequence, read N- to C-terminus: Large ribosomal subunit protein uL23c (102 aa).

It belongs to the universal ribosomal protein uL23 family. As to quaternary structure, part of the 50S ribosomal subunit.

It localises to the plastid. It is found in the chloroplast. Functionally, binds to 23S rRNA. This is Large ribosomal subunit protein uL23c (rpl23) from Trieres chinensis (Marine centric diatom).